The sequence spans 919 residues: PAX3- and PAX7-binding protein 1 (919 aa).

Residues 1 to 11 (MFRKARRVNVR) show a composition bias toward basic residues. 3 disordered regions span residues 1-120 (MFRK…ENEE), 151-206 (KTEL…GGAF), and 237-277 (AREL…RIVF). S16 bears the Phosphoserine mark. Acidic residues predominate over residues 16–28 (SEEEERERDEEQE). Over residues 49–59 (RAPAGESLLGP) the composition is skewed to low complexity. The span at 75 to 87 (AEAGGGISGGAEP) shows a compositional bias: gly residues. Residue K151 forms a Glycyl lysine isopeptide (Lys-Gly) (interchain with G-Cter in SUMO1); alternate linkage. Residue K151 forms a Glycyl lysine isopeptide (Lys-Gly) (interchain with G-Cter in SUMO2); alternate linkage. S160 carries the post-translational modification Phosphoserine. The span at 163–174 (PLDKTCHAKDTN) shows a compositional bias: basic and acidic residues. Acidic residues predominate over residues 185-195 (GEDEMDMESEK). The residue at position 193 (S193) is a Phosphoserine. Over residues 237 to 258 (ARELGDFTPHDSEPGKGRLVRE) the composition is skewed to basic and acidic residues. Residues 259 to 270 (DENDASDDEDDD) are compositionally biased toward acidic residues. A phosphoserine mark is found at S264, S297, S559, and S560. The interval 380–560 (TPSNEMAPVT…MADHLEGLSS (181 aa)) is necessary and sufficient for interaction with PAX7. The disordered stretch occupies residues 533-566 (EREARRTRRRQAREQTGQMADHLEGLSSDDEETS). T565 carries the post-translational modification Phosphothreonine.

This sequence belongs to the GCF family. In terms of assembly, interacts with PAX3 and PAX7. Interacts with WDR5; associates with a histone methyltransferase (HMT) complex composed at least of RBBP5, ASH2L, SET1, SET2 and KMT2A/MLL1, KMT2D/MLL2, KMT2C/MLL3 and KMT2B/MLL4 through direct interaction with WDR5. As to expression, ubiquitously expressed in all tissues tested including skeletal muscle. Expressed in primary myoblasts.

The protein resides in the nucleus. In terms of biological role, adapter protein linking the transcription factors PAX3 and PAX7 to the histone methylation machinery and involved in myogenesis. Associates with a histone methyltransferase complex that specifically mediates dimethylation and trimethylation of 'Lys-4' of histone H3. Mediates the recruitment of that complex to the transcription factors PAX3 and PAX7 on chromatin to regulate the expression of genes involved in muscle progenitor cells proliferation including ID3 and CDC20. The protein is PAX3- and PAX7-binding protein 1 (Paxbp1) of Mus musculus (Mouse).